Here is a 217-residue protein sequence, read N- to C-terminus: UDP-N-acetylglucosamine transferase subunit ALG14 (217 aa).

At 1-3 (MLS) the chain is on the lumenal side. The chain crosses the membrane as a helical span at residues 4–26 (ILILAATAAGLVILLFQRLWTVL). The Cytoplasmic segment spans residues 27-217 (GPHHVTPRES…PKSVYLGRIV (191 aa)).

Belongs to the ALG14 family. In terms of assembly, forms with ALG13 the active heterodimeric UDP-N-acetylglucosamine transferase complex.

Its subcellular location is the endoplasmic reticulum membrane. Functionally, part of the UDP-N-acetylglucosamine transferase complex that operates in the biosynthetic pathway of dolichol-linked oligosaccharides, the glycan precursors employed in protein asparagine (N)-glycosylation. The assembly of dolichol-linked oligosaccharides begins on the cytosolic side of the endoplasmic reticulum membrane and finishes in its lumen. The sequential addition of sugars to dolichol pyrophosphate produces dolichol-linked oligosaccharides containing fourteen sugars, including two GlcNAcs, nine mannoses and three glucoses. Once assembled, the oligosaccharides are transferred from the lipid to nascent proteins by oligosaccharyltransferases. Functions as a protein-membrane adapter recruiting ALG13 at the cytoplasmic face of the endoplasmic reticulum, where the complex catalyzes the second step of dolichol pyrophosphate biosynthesis, transferring a beta1,4-linked N-acetylglucosamine (GlcNAc) from UDP-GlcNAc to GlcNAc-pyrophosphatedolichol (Gn-PDol) to produce N,N'-diacetylchitobiosyl diphosphodolichol. N,N'-diacetylchitobiosyl diphosphodolichol is a substrate for ALG1, the following enzyme in the biosynthetic pathway. The protein is UDP-N-acetylglucosamine transferase subunit ALG14 of Mus musculus (Mouse).